The primary structure comprises 194 residues: MTGPFDDDGPEEDAPVPAPPDHLAGLRGIDLVRRTLEEARGAARSQGKDVGRGRSGPARRVGGNRRRRTWSGPGPDARDPQLLGAVTQDLAKSRGWSARVAEGSVIGRWRAVVGDQIADHATPTALNEGVLTVTAESTASATQLRMVQSQLLAKIAAVVGDGVVTTLKIVGPAGPSWRKGRYHVSGRGPRDTYG.

The span at 1–14 (MTGPFDDDGPEEDA) shows a compositional bias: acidic residues. Residues 1–81 (MTGPFDDDGP…GPGPDARDPQ (81 aa)) are disordered. Positions 30-52 (DLVRRTLEEARGAARSQGKDVGR) are enriched in basic and acidic residues.

Belongs to the UPF0232 family.

The sequence is that of UPF0232 protein in recF-gyrB intergenic region from Mycolicibacterium smegmatis (Mycobacterium smegmatis).